A 708-amino-acid polypeptide reads, in one-letter code: Elongation factor G (708 aa).

One can recognise a tr-type G domain in the interval 8-290; sequence KRYRNIGISA…AVIQYLPAPM (283 aa). Residues 17 to 24, 88 to 92, and 142 to 145 contribute to the GTP site; these read AHIDAGKT, DTPGH, and NKMD.

It belongs to the TRAFAC class translation factor GTPase superfamily. Classic translation factor GTPase family. EF-G/EF-2 subfamily.

The protein localises to the cytoplasm. In terms of biological role, catalyzes the GTP-dependent ribosomal translocation step during translation elongation. During this step, the ribosome changes from the pre-translocational (PRE) to the post-translocational (POST) state as the newly formed A-site-bound peptidyl-tRNA and P-site-bound deacylated tRNA move to the P and E sites, respectively. Catalyzes the coordinated movement of the two tRNA molecules, the mRNA and conformational changes in the ribosome. The polypeptide is Elongation factor G (Psychrobacter arcticus (strain DSM 17307 / VKM B-2377 / 273-4)).